Here is a 975-residue protein sequence, read N- to C-terminus: Translation initiation factor IF-2 (975 aa).

Composition is skewed to basic and acidic residues over residues 48 to 63 (DHLR…DKRK) and 120 to 177 (AELK…EAAA). 2 disordered regions span residues 48–85 (DHLR…KART) and 98–390 (KRDD…PTEP). Residues 178–211 (KRAAAAQAEAAQQAAAAREQAQRAQSEPAEQSAQ) are compositionally biased toward low complexity. Residues 212 to 263 (DEARAAAERAAQREAAKKAEDAAREAADKARAEQEEIRKRREAAEAEARAIR) are compositionally biased toward basic and acidic residues. Over residues 302-330 (KPAGEAAAARPAAKKPASGAPAPAAAPAG) the composition is skewed to low complexity. The span at 359–372 (SSGGVDRGWRGGPK) shows a compositional bias: gly residues. The region spanning 475 to 644 (PRPPVVTVMG…LLQAEVLELK (170 aa)) is the tr-type G domain. Residues 484-491 (GHVDHGKT) are G1. Position 484–491 (484–491 (GHVDHGKT)) interacts with GTP. The tract at residues 509 to 513 (GITQH) is G2. Residues 530-533 (DTPG) are G3. GTP is bound by residues 530–534 (DTPGH) and 584–587 (NKID). Residues 584-587 (NKID) are G4. Residues 620–622 (SAK) are G5.

The protein belongs to the TRAFAC class translation factor GTPase superfamily. Classic translation factor GTPase family. IF-2 subfamily.

The protein resides in the cytoplasm. Functionally, one of the essential components for the initiation of protein synthesis. Protects formylmethionyl-tRNA from spontaneous hydrolysis and promotes its binding to the 30S ribosomal subunits. Also involved in the hydrolysis of GTP during the formation of the 70S ribosomal complex. This is Translation initiation factor IF-2 from Burkholderia pseudomallei (strain 1106a).